The following is an 842-amino-acid chain: Elongation factor 2 (842 aa).

Residues 17–253 (SNVRNMSVIA…LWGENYFNPK (237 aa)) enclose the tr-type G domain. GTP-binding positions include 26–33 (AHVDHGKS), 104–108 (DSPGH), and 158–161 (NKVD). Serine 568 is subject to Phosphoserine. Phosphothreonine is present on threonine 574. At histidine 699 the chain carries Diphthamide.

The protein belongs to the TRAFAC class translation factor GTPase superfamily. Classic translation factor GTPase family. EF-G/EF-2 subfamily.

Its subcellular location is the cytoplasm. Functionally, catalyzes the GTP-dependent ribosomal translocation step during translation elongation. During this step, the ribosome changes from the pre-translocational (PRE) to the post-translocational (POST) state as the newly formed A-site-bound peptidyl-tRNA and P-site-bound deacylated tRNA move to the P and E sites, respectively. Catalyzes the coordinated movement of the two tRNA molecules, the mRNA and conformational changes in the ribosome. The polypeptide is Elongation factor 2 (eft201) (Schizosaccharomyces pombe (strain 972 / ATCC 24843) (Fission yeast)).